The chain runs to 240 residues: Methylthioribulose-1-phosphate dehydratase (240 aa).

Position 99 (Cys-99) interacts with substrate. Positions 116 and 118 each coordinate Zn(2+). The Proton donor/acceptor role is filled by Glu-145. His-201 is a Zn(2+) binding site.

It belongs to the aldolase class II family. MtnB subfamily. Requires Zn(2+) as cofactor.

It is found in the cytoplasm. It catalyses the reaction 5-(methylsulfanyl)-D-ribulose 1-phosphate = 5-methylsulfanyl-2,3-dioxopentyl phosphate + H2O. Its pathway is amino-acid biosynthesis; L-methionine biosynthesis via salvage pathway; L-methionine from S-methyl-5-thio-alpha-D-ribose 1-phosphate: step 2/6. In terms of biological role, catalyzes the dehydration of methylthioribulose-1-phosphate (MTRu-1-P) into 2,3-diketo-5-methylthiopentyl-1-phosphate (DK-MTP-1-P). The sequence is that of Methylthioribulose-1-phosphate dehydratase from Ajellomyces capsulatus (strain H143) (Darling's disease fungus).